A 141-amino-acid polypeptide reads, in one-letter code: uncharacterized protein (141 aa).

This sequence belongs to the PhzA/PhzB family.

This is an uncharacterized protein from Pseudomonas aeruginosa (strain ATCC 15692 / DSM 22644 / CIP 104116 / JCM 14847 / LMG 12228 / 1C / PRS 101 / PAO1).